Consider the following 207-residue polypeptide: Probable GTP-binding protein EngB (207 aa).

The EngB-type G domain maps to 24–199; the sequence is GGYEVAFAGR…RGIVGGWLGL (176 aa). GTP is bound by residues 32-39, 59-63, 77-80, 144-147, and 178-180; these read GRSNAGKS, GRTQQ, DLPG, TKAD, and YSG. Mg(2+) is bound by residues Ser-39 and Thr-61.

Belongs to the TRAFAC class TrmE-Era-EngA-EngB-Septin-like GTPase superfamily. EngB GTPase family. It depends on Mg(2+) as a cofactor.

Necessary for normal cell division and for the maintenance of normal septation. This is Probable GTP-binding protein EngB from Xanthomonas campestris pv. campestris (strain 8004).